The chain runs to 376 residues: Copper-containing nitrite reductase (376 aa).

A signal peptide (tat-type signal) is located at residues M1–A33. Plastocyanin-like domains are found at residues M98–L193 and G258–T359. Cu cation contacts are provided by H131, H136, H171, C172, H181, M186, and H342.

This sequence belongs to the multicopper oxidase family. Homotrimer. Cu(2+) is required as a cofactor. The cofactor is Cu(+). FAD serves as cofactor. Post-translationally, predicted to be exported by the Tat system. The position of the signal peptide cleavage has not been experimentally proven.

It localises to the periplasm. It carries out the reaction nitric oxide + Fe(III)-[cytochrome c] + H2O = Fe(II)-[cytochrome c] + nitrite + 2 H(+). It functions in the pathway nitrogen metabolism; nitrate reduction (denitrification); dinitrogen from nitrate: step 2/4. The sequence is that of Copper-containing nitrite reductase (nirK) from Rhizobium meliloti (strain 1021) (Ensifer meliloti).